Consider the following 374-residue polypeptide: Putative glutamate--cysteine ligase 2 (374 aa).

Belongs to the glutamate--cysteine ligase type 2 family. YbdK subfamily.

It carries out the reaction L-cysteine + L-glutamate + ATP = gamma-L-glutamyl-L-cysteine + ADP + phosphate + H(+). ATP-dependent carboxylate-amine ligase which exhibits weak glutamate--cysteine ligase activity. The polypeptide is Putative glutamate--cysteine ligase 2 (Paracidovorax citrulli (strain AAC00-1) (Acidovorax citrulli)).